We begin with the raw amino-acid sequence, 347 residues long: Zinc-type alcohol dehydrogenase-like protein C16A3.02c (347 aa).

The protein belongs to the zinc-containing alcohol dehydrogenase family. Quinone oxidoreductase subfamily.

It is found in the golgi apparatus. The protein localises to the endoplasmic reticulum. The protein is Zinc-type alcohol dehydrogenase-like protein C16A3.02c of Schizosaccharomyces pombe (strain 972 / ATCC 24843) (Fission yeast).